The following is a 264-amino-acid chain: Undecaprenyl-diphosphatase (264 aa).

The next 7 membrane-spanning stretches (helical) occupy residues 42-62 (ESLL…LVVF), 82-102 (TQFS…GLLF), 109-129 (LFGG…LLLW), 146-166 (AFII…RSGA), 184-204 (FSFL…LMSG), 215-235 (ILAT…TWMI), and 243-263 (LSWF…FAYA).

Belongs to the UppP family.

It localises to the cell membrane. It catalyses the reaction di-trans,octa-cis-undecaprenyl diphosphate + H2O = di-trans,octa-cis-undecaprenyl phosphate + phosphate + H(+). Catalyzes the dephosphorylation of undecaprenyl diphosphate (UPP). Confers resistance to bacitracin. The sequence is that of Undecaprenyl-diphosphatase from Christiangramia forsetii (strain DSM 17595 / CGMCC 1.15422 / KT0803) (Gramella forsetii).